Consider the following 460-residue polypeptide: MENFWQACSAQLEQELTPQQYSAWIKPLTPLDYEDGTLRIAAPNRFKLDWVKTQFASRITSIAAQFWEVPVEVQFVLDPRLVAARRPAAQASVVSDRADDVPSNVLEPIPSNATDHTPRRDQSRINTALTFDSFVTGKANQLARAAAIQVANNPGSSYNPLFLYGGVGLGKTHLIHAIGNQVLADNPNVKIRYIHAEQYVRDVVTAYQRKGFDDFKRYYHSLDLLLIDDIQFFGGKSRTQEEFFYAFEALIAAKKQIIITSDTYPKEITGMDDRLISRFDSGLTVAVEPPELEMRVAILLKKAVQEGVTFSDDVAFFVAKHLRSNVRELEGALRKILAYSRFHGKDITIEVVKDALKDLLSVQNRQISVENIQKTVADFFNIKVADMYSKKRPANIARPRQIAMYLAKELTQKSLPEIGELFGGRDHTTVLHAVRKIAADRGKSPECNHELHVLEQTLKG.

Positions 1–78 are domain I, interacts with DnaA modulators; that stretch reads MENFWQACSA…VPVEVQFVLD (78 aa). The domain II stretch occupies residues 78–123; the sequence is DPRLVAARRPAAQASVVSDRADDVPSNVLEPIPSNATDHTPRRDQS. The segment at 124 to 340 is domain III, AAA+ region; sequence RINTALTFDS…GALRKILAYS (217 aa). 4 residues coordinate ATP: G168, G170, K171, and T172. The domain IV, binds dsDNA stretch occupies residues 341–460; the sequence is RFHGKDITIE…LHVLEQTLKG (120 aa).

Belongs to the DnaA family. As to quaternary structure, oligomerizes as a right-handed, spiral filament on DNA at oriC.

The protein resides in the cytoplasm. Plays an essential role in the initiation and regulation of chromosomal replication. ATP-DnaA binds to the origin of replication (oriC) to initiate formation of the DNA replication initiation complex once per cell cycle. Binds the DnaA box (a 9 base pair repeat at the origin) and separates the double-stranded (ds)DNA. Forms a right-handed helical filament on oriC DNA; dsDNA binds to the exterior of the filament while single-stranded (ss)DNA is stabiized in the filament's interior. The ATP-DnaA-oriC complex binds and stabilizes one strand of the AT-rich DNA unwinding element (DUE), permitting loading of DNA polymerase. After initiation quickly degrades to an ADP-DnaA complex that is not apt for DNA replication. Binds acidic phospholipids. The chain is Chromosomal replication initiator protein DnaA from Herminiimonas arsenicoxydans.